A 476-amino-acid chain; its full sequence is Aspartate kinase Ask_Ect (476 aa).

One can recognise an ACT domain in the interval 405–476 (SAIGSDLKVK…ENHGDVIAAA (72 aa)).

It belongs to the aspartokinase family. In terms of assembly, monomer.

The protein resides in the cytoplasm. The enzyme catalyses L-aspartate + ATP = 4-phospho-L-aspartate + ADP. It participates in amine and polyamine biosynthesis; ectoine biosynthesis. With respect to regulation, allosterically and strongly feedback inhibited by tryptophan. The presence of either 650 mM NaCl or KCl reduces the inhibition by tryptophan. Involved in the biosynthesis of L-aspartate-beta-semialdehyde, which is an intermediate in the biosynthesis of ectoine, a highly soluble organic osmolyte, called compatible solute. Ectoine is used to avoid excessive water efflux, plasmolysis, molecular crowding of the cytoplasm, and cessation of growth in high salinity environments. Catalyzes the phosphorylation of the beta-carboxyl group of L-aspartate to yield 4-phospho-L-aspartate. The polypeptide is Aspartate kinase Ask_Ect (ask) (Stutzerimonas stutzeri (strain A1501) (Pseudomonas stutzeri)).